Reading from the N-terminus, the 125-residue chain is Small ribosomal subunit protein uS12 (125 aa).

Aspartate 89 carries the 3-methylthioaspartic acid modification. Positions glycine 106–alanine 125 are disordered. Residues serine 113–alanine 125 are compositionally biased toward basic residues.

This sequence belongs to the universal ribosomal protein uS12 family. In terms of assembly, part of the 30S ribosomal subunit. Contacts proteins S8 and S17. May interact with IF1 in the 30S initiation complex.

With S4 and S5 plays an important role in translational accuracy. In terms of biological role, interacts with and stabilizes bases of the 16S rRNA that are involved in tRNA selection in the A site and with the mRNA backbone. Located at the interface of the 30S and 50S subunits, it traverses the body of the 30S subunit contacting proteins on the other side and probably holding the rRNA structure together. The combined cluster of proteins S8, S12 and S17 appears to hold together the shoulder and platform of the 30S subunit. The protein is Small ribosomal subunit protein uS12 of Aromatoleum aromaticum (strain DSM 19018 / LMG 30748 / EbN1) (Azoarcus sp. (strain EbN1)).